We begin with the raw amino-acid sequence, 464 residues long: MKSTVEQLSPTRVRINVEVPFEELKPDFDKAYKALAQQIRLPGFRPGKAPAKLLEARVGRGAVLEQVVNDALPSRYSEAVTSASVKAIGQPEIEITKIEDGELLEFTAEVDVRPEITLPDYSELSVTVDPIEITDEAVEEQLLSLRQRFGTLTGVERAVEDGDFISIDLSATVDGEAVPEATASGLSHEVGSGQLIEGLDEAVVGVKAGESKEFTSTLVAGDHAGKEAVVTVTVGTVKERELPAEDDEFAQLASEFDTLDELKADLRERVARVRKVEQAGQIRDKVLETLLETVEVPLPEAVVKAEVDAALHDAVHGLDHDEEALNKLLEEQGTSREEFDKDAKESAERSVKTQLLLDAIADASDVTVGQDELTERILFQAQRYGMAPEQFIQQIQQAGQLGAVFADVRRGKALAGVVEQATVTDTSGAAVDTAELFGNGEAETEEAASTDEAASDSTESEDQK.

The PPIase FKBP-type domain maps to 162-243 (GDFISIDLSA…VGTVKERELP (82 aa)). Positions 435 to 464 (ELFGNGEAETEEAASTDEAASDSTESEDQK) are disordered.

The protein belongs to the FKBP-type PPIase family. Tig subfamily.

It is found in the cytoplasm. It carries out the reaction [protein]-peptidylproline (omega=180) = [protein]-peptidylproline (omega=0). Its function is as follows. Involved in protein export. Acts as a chaperone by maintaining the newly synthesized protein in an open conformation. Functions as a peptidyl-prolyl cis-trans isomerase. This Rhodococcus jostii (strain RHA1) protein is Trigger factor.